Reading from the N-terminus, the 141-residue chain is Large ribosomal subunit protein uL11 (141 aa).

This sequence belongs to the universal ribosomal protein uL11 family. In terms of assembly, part of the ribosomal stalk of the 50S ribosomal subunit. Interacts with L10 and the large rRNA to form the base of the stalk. L10 forms an elongated spine to which L12 dimers bind in a sequential fashion forming a multimeric L10(L12)X complex. Post-translationally, one or more lysine residues are methylated.

In terms of biological role, forms part of the ribosomal stalk which helps the ribosome interact with GTP-bound translation factors. The polypeptide is Large ribosomal subunit protein uL11 (Shouchella clausii (strain KSM-K16) (Alkalihalobacillus clausii)).